Reading from the N-terminus, the 471-residue chain is Ubiquitin carboxyl-terminal hydrolase calypso (471 aa).

A UCH catalytic domain is found at 45–276 (GWLELESDPG…IRFNLMAVVP (232 aa)). Cysteine 131 serves as the catalytic Nucleophile. Residue histidine 213 is the Proton donor of the active site. Coiled-coil stretches lie at residues 240-256 (WEDSEDWTDKFRRVMAE) and 298-324 (GTLQKLLKADEQGESGNGDSQRPDTPT). The disordered stretch occupies residues 307–326 (DEQGESGNGDSQRPDTPTTL). Polar residues predominate over residues 314–326 (NGDSQRPDTPTTL). The ULD domain occupies 375 to 403 (NYDKFICTFLSMLAHQGVLGELVSQHLLP). Residues 405–471 (KKVSGQGAAN…KGRNKCRKRK (67 aa)) form a positively charged C-terminal tail required for binding nucleosomes region. The interval 412 to 471 (AANRISKQSTTASAGGSTAAGTASTPKTQQQQAAAAKNGKSPSKTPGRRRKGRNKCRKRK) is disordered. A compositionally biased stretch (low complexity) spans 420-447 (STTASAGGSTAAGTASTPKTQQQQAAAA). The span at 457–471 (PGRRRKGRNKCRKRK) shows a compositional bias: basic residues.

It belongs to the peptidase C12 family. BAP1 subfamily. Catalytic component of the polycomb repressive deubiquitinase (PR-DUB) complex, at least composed of caly/calypso, Asx and sba (MBD5/6 homolog). The PR-DUB complex associates with nucleosomes to mediate deubiquitination of histone H2AK118ub1 substrates; the association requires the positively charged C-terminal tail of caly, probably due to direct binding of DNA. Interacts (via ULD domain) with Asx (via DEUBAD domain); the interaction produces a stable heterodimer with a composite binding site for ubiquitin. Homodimerizes (via coiled-coil hinge-region between the UCH and ULD domains) to mediate assembly of 2 copies of the caly-Asx heterodimer into a bisymmetric tetramer; dimerization enhances PR-DUB association with nucleosomes.

It localises to the nucleus. It catalyses the reaction Thiol-dependent hydrolysis of ester, thioester, amide, peptide and isopeptide bonds formed by the C-terminal Gly of ubiquitin (a 76-residue protein attached to proteins as an intracellular targeting signal).. Catalytic component of the polycomb repressive deubiquitinase (PR-DUB) complex, a complex that specifically mediates deubiquitination of histone H2A monoubiquitinated at 'Lys-119' (H2AK118ub1). Mediates bisymmetric organization of the PR-DUB complex and is involved in association with nucleosomes to mediate deubiquitination. Does not deubiquitinate monoubiquitinated histone H2B. Required to maintain the transcriptionally repressive state of homeotic genes throughout development. The PR-DUB complex has weak or no activity toward 'Lys-48'- and 'Lys-63'-linked polyubiquitin chains. Polycomb group (PcG) protein. In Drosophila melanogaster (Fruit fly), this protein is Ubiquitin carboxyl-terminal hydrolase calypso.